The following is a 255-amino-acid chain: Aliphatic sulfonates import ATP-binding protein SsuB (255 aa).

The ABC transporter domain maps to 5–231 (IRVNEKAFGK…PRSRTSPVFQ (227 aa)). 39 to 46 (GPSGCGKS) contacts ATP.

This sequence belongs to the ABC transporter superfamily. Aliphatic sulfonates importer (TC 3.A.1.17.2) family. In terms of assembly, the complex is composed of two ATP-binding proteins (SsuB), two transmembrane proteins (SsuC) and a solute-binding protein (SsuA).

It localises to the cell membrane. The catalysed reaction is ATP + H2O + aliphatic sulfonate-[sulfonate-binding protein]Side 1 = ADP + phosphate + aliphatic sulfonateSide 2 + [sulfonate-binding protein]Side 1.. Functionally, part of the ABC transporter complex SsuABC involved in aliphatic sulfonates import. Responsible for energy coupling to the transport system. This chain is Aliphatic sulfonates import ATP-binding protein SsuB, found in Bacillus licheniformis (strain ATCC 14580 / DSM 13 / JCM 2505 / CCUG 7422 / NBRC 12200 / NCIMB 9375 / NCTC 10341 / NRRL NRS-1264 / Gibson 46).